A 268-amino-acid polypeptide reads, in one-letter code: Ribosomal RNA small subunit methyltransferase A (268 aa).

Positions 16, 18, 43, 64, 89, and 110 each coordinate S-adenosyl-L-methionine.

The protein belongs to the class I-like SAM-binding methyltransferase superfamily. rRNA adenine N(6)-methyltransferase family. RsmA subfamily.

The protein localises to the cytoplasm. The catalysed reaction is adenosine(1518)/adenosine(1519) in 16S rRNA + 4 S-adenosyl-L-methionine = N(6)-dimethyladenosine(1518)/N(6)-dimethyladenosine(1519) in 16S rRNA + 4 S-adenosyl-L-homocysteine + 4 H(+). Specifically dimethylates two adjacent adenosines (A1518 and A1519) in the loop of a conserved hairpin near the 3'-end of 16S rRNA in the 30S particle. May play a critical role in biogenesis of 30S subunits. The polypeptide is Ribosomal RNA small subunit methyltransferase A (Pseudomonas syringae pv. tomato (strain ATCC BAA-871 / DC3000)).